Consider the following 299-residue polypeptide: B3 domain-containing transcription factor NGA2 (299 aa).

Positions 1-21 are disordered; the sequence is MNQEDKEKPIEEASSSMEREH. The segment at residues 23 to 129 is a DNA-binding region (TF-B3); that stretch reads FDKVVTPSDV…KLYIDWRRRP (107 aa). Residues 226 to 249 are disordered; it reads GGGGSVNSTEEESSSSGGSIPRGR.

Its subcellular location is the nucleus. Regulates lateral organ growth. Functionally redundant with NGA1, NGA3 and NGA4. This Arabidopsis thaliana (Mouse-ear cress) protein is B3 domain-containing transcription factor NGA2 (NGA2).